The primary structure comprises 279 residues: Eukaryotic translation initiation factor 3 subunit G (279 aa).

Disordered regions lie at residues 69–90 (AKYGKEKHSSPGPDTSTTQLGE) and 149–193 (LNGG…EARD). Ser-77 is subject to Phosphoserine. The RRM domain maps to 196–275 (TTLKVSQLNT…LILHLEWSKK (80 aa)).

Belongs to the eIF-3 subunit G family. As to quaternary structure, component of the eukaryotic translation initiation factor 3 (eIF-3) complex.

The protein localises to the cytoplasm. Its function is as follows. RNA-binding component of the eukaryotic translation initiation factor 3 (eIF-3) complex, which is involved in protein synthesis of a specialized repertoire of mRNAs and, together with other initiation factors, stimulates binding of mRNA and methionyl-tRNAi to the 40S ribosome. The eIF-3 complex specifically targets and initiates translation of a subset of mRNAs involved in cell proliferation. This subunit can bind 18S rRNA. The polypeptide is Eukaryotic translation initiation factor 3 subunit G (Lodderomyces elongisporus (strain ATCC 11503 / CBS 2605 / JCM 1781 / NBRC 1676 / NRRL YB-4239) (Yeast)).